The primary structure comprises 505 residues: Maturase K (505 aa).

The protein belongs to the intron maturase 2 family. MatK subfamily.

Its subcellular location is the plastid. The protein resides in the chloroplast. In terms of biological role, usually encoded in the trnK tRNA gene intron. Probably assists in splicing its own and other chloroplast group II introns. The polypeptide is Maturase K (Calycanthus floridus (Eastern sweetshrub)).